Reading from the N-terminus, the 474-residue chain is Glutathione synthetase (474 aa).

A2 is subject to N-acetylalanine. R125 lines the substrate pocket. Position 144 (E144) interacts with ATP. Positions 144 and 146 each coordinate Mg(2+). Residues 148–151 (VSAS), 214–216 (ERN), Q220, and 267–270 (RDGY) contribute to the substrate site. ATP-binding positions include K305, 364–373 (KPQREGGGNN), Y375, and 398–401 (MEKI). Residue E368 coordinates Mg(2+). S415 carries the post-translational modification Phosphoserine. E425 is a binding site for ATP. R450 contributes to the substrate binding site. Residues K452 and D458 each coordinate ATP. Substrate is bound at residue 461-462 (VA).

Belongs to the eukaryotic GSH synthase family. As to quaternary structure, homodimer. Requires Mg(2+) as cofactor.

It catalyses the reaction gamma-L-glutamyl-L-cysteine + glycine + ATP = glutathione + ADP + phosphate + H(+). The catalysed reaction is gamma-L-glutamyl-(2S)-2-aminobutanoate + glycine + ATP = ophthalmate + ADP + phosphate + H(+). It functions in the pathway sulfur metabolism; glutathione biosynthesis; glutathione from L-cysteine and L-glutamate: step 2/2. Catalyzes the production of glutathione from gamma-glutamylcysteine and glycine in an ATP-dependent manner. Glutathione (gamma-glutamylcysteinylglycine, GSH) is the most abundant intracellular thiol in living aerobic cells and is required for numerous processes including the protection of cells against oxidative damage, amino acid transport, the detoxification of foreign compounds, the maintenance of protein sulfhydryl groups in a reduced state and acts as a cofactor for a number of enzymes. Participates in ophthalmate biosynthesis in hepatocytes. This Bos taurus (Bovine) protein is Glutathione synthetase.